The primary structure comprises 184 residues: Ribosome maturation factor RimP (184 aa).

The protein belongs to the RimP family.

Its subcellular location is the cytoplasm. Its function is as follows. Required for maturation of 30S ribosomal subunits. The chain is Ribosome maturation factor RimP from Corynebacterium diphtheriae (strain ATCC 700971 / NCTC 13129 / Biotype gravis).